Consider the following 218-residue polypeptide: Protein-L-isoaspartate O-methyltransferase (218 aa).

The active site involves serine 66.

The protein belongs to the methyltransferase superfamily. L-isoaspartyl/D-aspartyl protein methyltransferase family.

The protein resides in the cytoplasm. It catalyses the reaction [protein]-L-isoaspartate + S-adenosyl-L-methionine = [protein]-L-isoaspartate alpha-methyl ester + S-adenosyl-L-homocysteine. Its function is as follows. Catalyzes the methyl esterification of L-isoaspartyl residues in peptides and proteins that result from spontaneous decomposition of normal L-aspartyl and L-asparaginyl residues. It plays a role in the repair and/or degradation of damaged proteins. This Caulobacter sp. (strain K31) protein is Protein-L-isoaspartate O-methyltransferase.